Here is a 639-residue protein sequence, read N- to C-terminus: UPF0313 protein CLJ_B0249 (639 aa).

A Radical SAM core domain is found at 295–566 (AIKEVKFSIT…RMQRSLLQFS (272 aa)). C309, C313, and C316 together coordinate [4Fe-4S] cluster. Residues 597 to 639 (YNKPYKKSHKKNNAKNKNNNYNKNKDVSKKNKKNSLSKHKKRK) are disordered. Composition is skewed to basic residues over residues 600–610 (PYKKSHKKNNA) and 626–639 (KNKKNSLSKHKKRK).

It belongs to the UPF0313 family. [4Fe-4S] cluster serves as cofactor.

This is UPF0313 protein CLJ_B0249 from Clostridium botulinum (strain 657 / Type Ba4).